The sequence spans 883 residues: MQMDRKTQIIDYDGNMIADLKEWMIRNKLANLGFNYNVVAILGSQSSGKSTLLNNLFKTSFDVMNTKLGHSQTTQGLWLSFDTFEESPVSPLEKGNSTTPINPTLILDVEGNDSKERGDNRLTFEHRSALFSLALADCLIVNLWYHSLGNFTASNYGLLKTVMEVNLELFQQDKNCPKTILLFTVRDWFEEFASIDIVKNKIVEEYLNKIWAEMKKPPSAKKANINNYFIVEVVGLSHAIIKKTEFLNDVENLRKKWINELRPLQYSRNIPSDGFAHYCNNIWNTIVKQSQLDIPSQKEMLATFRCQEIKNNVISNTSKMIKEKLTASSSQPTSASIDEFKSWAEKDIVEKSLDEYFVDASRYTESICLKTSEELLESLFIQLQTIVDNNLNFTQRVLSAKFANELNTMYSVCTSDKNVFLFSKESNLQVHKDGNGSNSSKEDKKDENTSQDKCIRLWSSFLSNADKLEYITFCNFFESYQKCNIEIRKKNKIHEFNYKPSLNILLTSICKDMNRIRNTQFTVLLERTRATIKSRFKNMDNLLITTKNPEEYWNHTLKIVKALQESINNNLTKCFINLKGGGPGSSVAGISNELFDHDEDNTFHVDSPSEGHRSISDNRTAHENKHYVDENLLNYKKIDIIKNKGKYISSVSEEIDKQIKNKKAISELNNYYLDEIMDVLKSKLDEISDNLSSIIIQRFESVFNYDDAEQPRHWREISMAELKKIFRESKNYAFLIIDILQKNIKVELIDDYLPNNFIKDEVIEKGKNKAKRKIQEICRDAQYIQETGGKMSLKNVPLFFWVILLILGWNELLFFIRFFFRLNIILPLFLAAAVILSTLFFNGNMEVLSTINKVVFFLAKSSFGFYRQLQTMGEKVAQVPTAD.

The Cytoplasmic segment spans residues 1–795 (MQMDRKTQII…ETGGKMSLKN (795 aa)). The region spanning 33–279 (GFNYNVVAIL…IPSDGFAHYC (247 aa)) is the GB1/RHD3-type G domain. Position 43–50 (43–50 (GSQSSGKS)) interacts with GTP. Residues 673–693 (LDEIMDVLKSKLDEISDNLSS) are a coiled coil. The helical transmembrane segment at 796–816 (VPLFFWVILLILGWNELLFFI) threads the bilayer. Residues 817–819 (RFF) lie on the Lumenal side of the membrane. A helical transmembrane segment spans residues 820–840 (FRLNIILPLFLAAAVILSTLF). At 841–883 (FNGNMEVLSTINKVVFFLAKSSFGFYRQLQTMGEKVAQVPTAD) the chain is on the cytoplasmic side.

This sequence belongs to the TRAFAC class dynamin-like GTPase superfamily. GB1/RHD3 GTPase family. RHD3 subfamily.

The protein resides in the endoplasmic reticulum membrane. Its function is as follows. Probable GTP-binding protein involved in generating and maintaining the structure of the tubular endoplasmic reticulum network. This is Protein SEY1 homolog from Plasmodium knowlesi (strain H).